We begin with the raw amino-acid sequence, 194 residues long: High mobility group protein B4 (194 aa).

DNA-binding regions (HMG box) lie at residues 9–79 (PKAN…MNYF) and 93–161 (PRRP…SVYR).

Belongs to the HMGB family.

It localises to the nucleus. Its subcellular location is the chromosome. This is High mobility group protein B4 (HMGB4) from Bos taurus (Bovine).